The following is a 108-amino-acid chain: Peptidyl-prolyl cis-trans isomerase FKBP1A (108 aa).

A PPIase FKBP-type domain is found at 20–108 (GQTCVVHYTG…IFDVELLKLE (89 aa)). The residue at position 53 (lysine 53) is an N6-acetyllysine; alternate. Position 53 is an N6-succinyllysine; alternate (lysine 53).

It belongs to the FKBP-type PPIase family. FKBP1 subfamily. In terms of assembly, interacts with TGFBR1; prevents TGFBR1 phosphorylation by TGFBR2 and stabilizes it in the inactive conformation. Interacts with ACVR1B and SMAD7. Identified in a complex composed of RYR1, PDE4D, PKA, FKBP1A and protein phosphatase 1 (PP1). Interacts directly with RYR2 and RYR3. Interacts with GLMN; rapamycin and FK506 abolish the interaction with GLMN in a dose dependent manner. Interacts directly with RYR1.

It localises to the cytoplasm. Its subcellular location is the cytosol. It is found in the sarcoplasmic reticulum membrane. It carries out the reaction [protein]-peptidylproline (omega=180) = [protein]-peptidylproline (omega=0). Its activity is regulated as follows. Inhibited by both FK506 and rapamycin. Functionally, keeps in an inactive conformation TGFBR1, the TGF-beta type I serine/threonine kinase receptor, preventing TGF-beta receptor activation in absence of ligand. May modulate the RYR1 calcium channel activity. PPIases accelerate the folding of proteins. It catalyzes the cis-trans isomerization of proline imidic peptide bonds in oligopeptides. This chain is Peptidyl-prolyl cis-trans isomerase FKBP1A (FKBP1A), found in Bos taurus (Bovine).